A 428-amino-acid polypeptide reads, in one-letter code: Glutamate-1-semialdehyde 2,1-aminomutase 1 (428 aa).

Lys-268 is modified (N6-(pyridoxal phosphate)lysine).

It belongs to the class-III pyridoxal-phosphate-dependent aminotransferase family. HemL subfamily. As to quaternary structure, homodimer. It depends on pyridoxal 5'-phosphate as a cofactor.

Its subcellular location is the cytoplasm. It carries out the reaction (S)-4-amino-5-oxopentanoate = 5-aminolevulinate. It functions in the pathway porphyrin-containing compound metabolism; protoporphyrin-IX biosynthesis; 5-aminolevulinate from L-glutamyl-tRNA(Glu): step 2/2. The polypeptide is Glutamate-1-semialdehyde 2,1-aminomutase 1 (Bacillus cereus (strain G9842)).